Here is a 288-residue protein sequence, read N- to C-terminus: N(1)-aminopropylagmatine ureohydrolase (288 aa).

Mn(2+)-binding residues include histidine 114, aspartate 133, histidine 135, aspartate 137, aspartate 213, and aspartate 215.

This sequence belongs to the arginase family. Mn(2+) is required as a cofactor.

It is found in the cytoplasm. It carries out the reaction N(1)-(3-aminopropyl)agmatine + H2O = urea + spermidine. The catalysed reaction is agmatine + H2O = urea + putrescine. It participates in amine and polyamine biosynthesis; spermidine biosynthesis. In terms of biological role, involved in the biosynthesis of polyamines which are thought to support the growth of thermophilic microorganisms under high-temperature conditions. It seems that long-chain and branched-chain of polyamines effectively stabilize DNA and RNA, respectively. Catalyzes the decarboxylation of N1-(3-aminopropyl)agmatine to yield spermidine and urea. It can also use agmatine to yield putrescine. This is N(1)-aminopropylagmatine ureohydrolase from Thermococcus kodakarensis (strain ATCC BAA-918 / JCM 12380 / KOD1) (Pyrococcus kodakaraensis (strain KOD1)).